The sequence spans 276 residues: Putative ripening-related protein 5 (276 aa).

A signal peptide spans 1–18; it reads MAMIFLLAALSTTHLASS.

It belongs to the kiwellin family.

It localises to the secreted. The polypeptide is Putative ripening-related protein 5 (Oryza sativa subsp. japonica (Rice)).